The chain runs to 141 residues: Flagellar assembly factor FliW (141 aa).

This sequence belongs to the FliW family. As to quaternary structure, interacts with translational regulator CsrA and flagellin(s).

It localises to the cytoplasm. In terms of biological role, acts as an anti-CsrA protein, binds CsrA and prevents it from repressing translation of its target genes, one of which is flagellin. Binds to flagellin and participates in the assembly of the flagellum. In Clostridium botulinum (strain Alaska E43 / Type E3), this protein is Flagellar assembly factor FliW.